We begin with the raw amino-acid sequence, 516 residues long: MLYSQRSRPRHREVTGPQPHSVAVVAKFPSSRPRDFAILERRRHEEAREQILTFTKLNTTERVKNKWARVTDQKLLHNMVQREVYRTMEEYKMHLNERRERLSTLLEREEMAYIKEMEAMEETTLERQAKMRERVKSLREKREKERMDFIAEKRDQQFREQCEELRSLRSQIHLNEVCTERMAQIVLKEELNRQRKEEDTIFDQLWEQDRLAKEEQEEKKRQKRIELNQEIACLQKAASEAQKMQEKRLKEEESKLMAEEQRLIKLEEERNLKEKQQNKLQVKSMLEDSIRLKMKRLAREQQEELALDMKILEHVMQGYQDDTEEKRQRKMELRKEQQLYREYLAQQLEEEKRQEREMDKMIEAELEKSWAKKSEQMRKEKEARKRLMKDVMDTRRVQIQEKLERNAKLQEELAHDKELLESATEEHKQLETDRNARQMKVAQQYQRDLVSQVAYQQSQRQAEREEEQREFEAGLTAEKAYQNKLREILSRPYVGHENIHPLRRGRISSPKDWLPQ.

2 coiled-coil regions span residues 217–283 (EEKK…LQVK) and 316–440 (MQGY…RQMK). Basic and acidic residues-rich tracts occupy residues 417 to 436 (KELL…DRNA) and 461 to 472 (QAEREEEQREFE). Disordered regions lie at residues 417-443 (KELL…KVAQ) and 455-475 (YQQS…EAGL).

It belongs to the CFAP53 family.

The protein resides in the cytoplasm. It localises to the cytoskeleton. Its subcellular location is the cilium axoneme. It is found in the microtubule organizing center. The protein localises to the centrosome. The protein resides in the centriolar satellite. Functionally, microtubule inner protein (MIP) part of the dynein-decorated doublet microtubules (DMTs) in cilia axoneme, which is required for motile cilia beating. Regulates motility patterns of both 9+0 and 9+2 motile cilia through differential localization and recruitment of axonemal dynein components. Required for motile cilium formation and movement. Involved in the establishment of left-right symmetry during embryogenesis. The chain is Cilia- and flagella-associated protein 53 from Xenopus laevis (African clawed frog).